Here is a 503-residue protein sequence, read N- to C-terminus: Probable voltage-gated potassium channel subunit kvs-4 (503 aa).

Topologically, residues 1–231 are cytoplasmic; that stretch reads MNSAIMQGAA…EPASSGKAQA (231 aa). Residues 217–219 carry the Required for dendritic localization motif; that stretch reads WNI. A helical membrane pass occupies residues 232–252; that stretch reads FAVCSVVFVLISISGLVLGSL. At 253-275 the chain is on the extracellular side; that stretch reads PELQVATKQRNNLTGEEFTEMEP. N264 carries N-linked (GlcNAc...) asparagine glycosylation. A helical membrane pass occupies residues 276–296; sequence MPILGYIEYVCIVWFTMEYGL. Over 297-313 the chain is Cytoplasmic; sequence KMLVSAERSKTFRQLLN. A helical membrane pass occupies residues 314–334; that stretch reads IIDLLAILPFIIEMLLLIFGI. The Extracellular portion of the chain corresponds to 335–346; sequence STEQLRDLKGAF. Residues 347-366 traverse the membrane as a helical; Voltage-sensor segment; it reads LVIRILRVLRVIRVLKLGRY. Topologically, residues 367 to 383 are cytoplasmic; that stretch reads SSGLQMFGKTLKASFRQ. Residues 368-383 are S4-S5 linker; it reads SGLQMFGKTLKASFRQ. The helical transmembrane segment at 384–404 threads the bilayer; it reads LGMMAMVVMTGVIFFSTLVYF. The Extracellular segment spans residues 405–417; it reads LEKDEPASKFHSI. The helical intramembrane region spans 418–429; sequence PAACWWCIVTMT. Residues 430–434 lie within the membrane without spanning it; it reads TVGYG. The short motif at 430–435 is the Selectivity filter element; that stretch reads TVGYGD. The Extracellular portion of the chain corresponds to 435-445; that stretch reads DLTPVTVPGKL. The helical transmembrane segment at 446 to 466 threads the bilayer; sequence VATGAIACGVLVLALPITIIV. Over 467-503 the chain is Cytoplasmic; it reads DNFMKVAETERPAGGNRYRTSQYPKATKSEQMILKVT. The short motif at 496–500 is the Required for dendritic localization element; sequence EQMIL.

Belongs to the potassium channel family. B (Shab) (TC 1.A.1.2) subfamily. Kv2.2/KCNB2 sub-subfamily. As to quaternary structure, homotetramer or heterotetramer. Interacts with unc-101 (via N-terminus); which targets kvs-4 to dendrites. Expressed in the cholinergic motor neuron DA9, mechanosensory neurons ALM and PLM, and the interneuron PVPL.

The protein resides in the cell membrane. It localises to the perikaryon. Its subcellular location is the cell projection. It is found in the axon. The protein localises to the dendrite. Voltage-gated potassium channel that mediates transmembrane potassium transport in excitable membranes. The polypeptide is Probable voltage-gated potassium channel subunit kvs-4 (Caenorhabditis elegans).